We begin with the raw amino-acid sequence, 272 residues long: 27-O-demethylrifamycin SV methyltransferase (272 aa).

Residues S89, Q94, 117-118 (DA), L134, and H139 each bind S-adenosyl-L-methionine.

It belongs to the class I-like SAM-binding methyltransferase superfamily. In terms of assembly, exists probably as a trimer.

The enzyme catalyses 27-O-demethylrifamycin SV + S-adenosyl-L-methionine = rifamycin SV + S-adenosyl-L-homocysteine + H(+). The protein operates within antibiotic biosynthesis; rifamycin B biosynthesis. Slightly inhibited by Ca(2+) and Mg(2+). Strongly inhibited by Zn(2+), Ni(2+) and Co(2+). Functionally, catalyzes the methylation of 27-O-demethylrifamycin SV (DMRSV) to rifamycin SV. In Amycolatopsis mediterranei (strain S699) (Nocardia mediterranei), this protein is 27-O-demethylrifamycin SV methyltransferase.